Reading from the N-terminus, the 578-residue chain is GPI-anchor transamidase component PIGT (578 aa).

An N-terminal signal peptide occupies residues 1–21 (MAAAMPLALLVLLLLGPGGWC). Residues 22–525 (LAEPPRDSLR…NLPTPDFSMP (504 aa)) lie on the Lumenal side of the membrane. Asparagine 164 carries N-linked (GlcNAc...) asparagine glycosylation. Disulfide bonds link cysteine 195-cysteine 272 and cysteine 226-cysteine 231. 2 N-linked (GlcNAc...) asparagine glycosylation sites follow: asparagine 291 and asparagine 327. A 2-acyl-6-[6-phosphoethanolamine-alpha-D-mannosyl-(1-&gt;2)-6-phosphoethanolamine-alpha-D-mannosyl-(1-&gt;6)-2-phosphoethanolamine-alpha-D-mannosyl-(1-&gt;4)-alpha-D-glucosaminyl]-1-(1-radyl,2-acyl-sn-glycero-3-phospho)-1D-myo-inositol is bound by residues asparagine 461, aspartate 521, serine 523, and asparagine 527. A helical transmembrane segment spans residues 526–548 (YNVICLTCTVVAVCYGSFYNLLT). Over 549-578 (RTFHIEEPRTGGLAKRLANLIRRARGVPPL) the chain is Cytoplasmic.

Belongs to the PIGT family. Heteropentamer. Part of the GPI-anchor transamidase complex, consisting of PIGK, PIGT, PIGS, PIGU and GAA1. Post-translationally, the disulfide bond between PIGK/GPI8 and PIGT is important for normal enzyme activity.

It localises to the endoplasmic reticulum membrane. Its pathway is glycolipid biosynthesis; glycosylphosphatidylinositol-anchor biosynthesis. Component of the glycosylphosphatidylinositol-anchor (GPI-anchor) transamidase (GPI-T) complex that catalyzes the formation of the linkage between a proprotein and a GPI-anchor and participates in GPI anchored protein biosynthesis. May play a crucial role in GPI-T complex assembly in the luminal layer. Binds GPI-anchor. In Homo sapiens (Human), this protein is GPI-anchor transamidase component PIGT.